The chain runs to 69 residues: Sec-independent protein translocase protein TatA (69 aa).

A helical transmembrane segment spans residues 1 to 21 (MFGKLGMPELVLIFAVALVIF).

It belongs to the TatA/E family. In terms of assembly, forms a complex with TatC.

The protein localises to the cell membrane. Part of the twin-arginine translocation (Tat) system that transports large folded proteins containing a characteristic twin-arginine motif in their signal peptide across membranes. TatA could form the protein-conducting channel of the Tat system. This chain is Sec-independent protein translocase protein TatA, found in Alkaliphilus metalliredigens (strain QYMF).